The following is a 1357-amino-acid chain: DNA-directed RNA polymerase subunit beta (1357 aa).

Belongs to the RNA polymerase beta chain family. In terms of assembly, the RNAP catalytic core consists of 2 alpha, 1 beta, 1 beta' and 1 omega subunit. When a sigma factor is associated with the core the holoenzyme is formed, which can initiate transcription.

The catalysed reaction is RNA(n) + a ribonucleoside 5'-triphosphate = RNA(n+1) + diphosphate. DNA-dependent RNA polymerase catalyzes the transcription of DNA into RNA using the four ribonucleoside triphosphates as substrates. The chain is DNA-directed RNA polymerase subunit beta from Neorickettsia sennetsu (Ehrlichia sennetsu).